The following is a 1164-amino-acid chain: Auxin response factor 7 (1164 aa).

Residues 127 to 229 (FCKTLTASDT…QLLLGIRRAN (103 aa)) constitute a DNA-binding region (TF-B3). 5 disordered regions span residues 451–505 (HNNL…QQQL), 536–555 (QQLQ…QQQQ), 570–728 (HQQP…LLQQ), 765–858 (FLSP…SSSG), and 903–930 (KSKA…GENN). Polar residues predominate over residues 464–489 (LSFQTPHGGISSSNLQFNKQNQQAPM). The span at 570–635 (HQQPLQQQTQ…SQQASTHHLQ (66 aa)) shows a compositional bias: low complexity. Residues 637 to 651 (QLVSGSMASSVITPP) show a composition bias toward polar residues. Over residues 652 to 671 (SSSLNQSFQQQQQQSKQLQQ) the composition is skewed to low complexity. Positions 678 to 710 (ASTSQSSVIETSKSSSNLMSAPPQETQFSRQVE) are enriched in polar residues. Composition is skewed to low complexity over residues 711 to 728 (QQQP…LLQQ) and 765 to 790 (FLSP…TLSQ). Positions 791 to 808 (GHQFPSSCTNNGLSTLQP) are enriched in polar residues. A compositionally biased stretch (low complexity) spans 841 to 851 (PSSSTSPSTNN). A compositionally biased stretch (polar residues) spans 903-921 (KSKASLTDHQLEASASGTS). The PB1 domain maps to 1037–1130 (RTYTKVQKRG…EVQQMSLDGN (94 aa)). The disordered stretch occupies residues 1145–1164 (DSGNAWRGHYDDNSATSFNR).

The protein belongs to the ARF family. As to quaternary structure, homodimers and heterodimers. Interacts with the auxin-responsive proteins IAA1 and IAA12 (BODENLOS). Interacts (via PB1 domain) with IAA17 (via PB1 domain). Interacts with IAA19. Interacts with ARF5. Binds to JMJ30. Binds to ATXR2 in the nucleus. In terms of tissue distribution, expressed in the whole plant.

It localises to the nucleus. Its function is as follows. Auxin response factors (ARFs) are transcriptional factors that bind specifically to the DNA sequence 5'-TGTCTC-3' found in the auxin-responsive promoter elements (AuxREs). Acts as a transcriptional activator of several tropic stimulus-induced (TSI) genes, including SAUR50. Formation of heterodimers with Aux/IAA proteins may alter their ability to modulate early auxin response genes expression. Required for differential growth responses of aerial tissues. Involved in ethylene responses. Regulates lateral root formation through direct regulation of LBD16 and/or LBD29. Functionally redundant with ARF19. Mediates embryo axis formation and vascular tissues differentiation. Functionally redundant with ARF5. Involved in cellular dedifferentiation during callus formation on callus-inducing medium (CIM) and in an ATXR2-dependent manner. This chain is Auxin response factor 7, found in Arabidopsis thaliana (Mouse-ear cress).